A 103-amino-acid chain; its full sequence is MSGRGKGGKGLGKGGAKRHRKVLRDNIQGITKPAIRRLARRGGVKRISGLIYEETRSVLKVFLENVIRDAVTYTEHARRKTVTAMDVVYALKRQGRTLYGFGG.

The span at 1–14 shows a compositional bias: gly residues; the sequence is MSGRGKGGKGLGKG. Positions 1–20 are disordered; that stretch reads MSGRGKGGKGLGKGGAKRHR. Position 2 is an N-acetylserine (Ser2). Residue Lys17 is modified to N6-acetyllysine. Residues 17–21 mediate DNA binding; that stretch reads KRHRK. Lys21 carries the post-translational modification N6-methyllysine.

It belongs to the histone H4 family. The nucleosome is a histone octamer containing two molecules each of H2A, H2B, H3 and H4 assembled in one H3-H4 heterotetramer and two H2A-H2B heterodimers. The octamer wraps approximately 147 bp of DNA.

Its subcellular location is the nucleus. It localises to the chromosome. Functionally, core component of nucleosome. Nucleosomes wrap and compact DNA into chromatin, limiting DNA accessibility to the cellular machineries which require DNA as a template. Histones thereby play a central role in transcription regulation, DNA repair, DNA replication and chromosomal stability. DNA accessibility is regulated via a complex set of post-translational modifications of histones, also called histone code, and nucleosome remodeling. In Pyrenomonas salina, this protein is Histone H4.